Reading from the N-terminus, the 309-residue chain is tRNA uridine(34) hydroxylase (309 aa).

The Rhodanese domain maps to Arg130–Leu225. Residue Cys185 is the Cysteine persulfide intermediate of the active site.

Belongs to the TrhO family.

The catalysed reaction is uridine(34) in tRNA + AH2 + O2 = 5-hydroxyuridine(34) in tRNA + A + H2O. Functionally, catalyzes oxygen-dependent 5-hydroxyuridine (ho5U) modification at position 34 in tRNAs. The sequence is that of tRNA uridine(34) hydroxylase from Corynebacterium aurimucosum (strain ATCC 700975 / DSM 44827 / CIP 107346 / CN-1) (Corynebacterium nigricans).